A 257-amino-acid chain; its full sequence is Probable enoyl-CoA hydratase echA17 (257 aa).

Belongs to the enoyl-CoA hydratase/isomerase family.

It catalyses the reaction a (3S)-3-hydroxyacyl-CoA = a (2E)-enoyl-CoA + H2O. The enzyme catalyses a 4-saturated-(3S)-3-hydroxyacyl-CoA = a (3E)-enoyl-CoA + H2O. Functionally, could possibly oxidize fatty acids using specific components. The sequence is that of Probable enoyl-CoA hydratase echA17 (echA17) from Mycolicibacterium paratuberculosis (strain ATCC BAA-968 / K-10) (Mycobacterium paratuberculosis).